The chain runs to 84 residues: MKVVLLVCLVWMMAMMELVSCECWSQADCSDGHCCAGSSFSENCRPYGGDGEQCEPRNKYEVYSTGCPCEENLMCSVINRCQSA.

An N-terminal signal peptide occupies residues 1 to 21; sequence MKVVLLVCLVWMMAMMELVSC. 5 disulfide bridges follow: cysteine 23–cysteine 35, cysteine 29–cysteine 44, cysteine 34–cysteine 67, cysteine 54–cysteine 75, and cysteine 69–cysteine 81.

This sequence belongs to the AVIT (prokineticin) family. As to expression, expressed by the venom gland.

It is found in the secreted. This Cyriopagopus hainanus (Chinese bird spider) protein is U8-theraphotoxin-Hhn1g.